The following is a 414-amino-acid chain: Voltage-gated ClC-type chloride channel ClcB (414 aa).

The next 11 membrane-spanning stretches (helical) occupy residues 5–25 (LVIS…FHQA), 54–74 (ALTP…YQRY), 116–136 (SAIG…SVFA), 147–167 (LWVA…PLAG), 169–189 (LFIA…PVVI), 220–240 (VQYF…PLFL), 255–275 (LLPP…SLIF), 292–312 (TPPG…AVLA), 327–347 (LFVG…WPVL), 353–373 (LLMA…APIM), and 381–401 (MTGE…ATTI).

It belongs to the chloride channel (TC 2.A.49) family. ClcB subfamily.

The protein resides in the cell inner membrane. Its function is as follows. Probably acts as an electrical shunt for an outwardly-directed proton pump that is linked to amino acid decarboxylation, as part of the extreme acid resistance (XAR) response. The chain is Voltage-gated ClC-type chloride channel ClcB from Yersinia pseudotuberculosis serotype O:1b (strain IP 31758).